The sequence spans 83 residues: Retinal cone rhodopsin-sensitive cGMP 3',5'-cyclic phosphodiesterase subunit gamma (83 aa).

Residues 1 to 17 (MSDNTVLAPPTSNQGPT) show a composition bias toward polar residues. The segment at 1–51 (MSDNTVLAPPTSNQGPTTPRKGPPKFKQRQTRQFKSKPPKKGVKGFGDDIP) is disordered. The segment covering 22–43 (GPPKFKQRQTRQFKSKPPKKGV) has biased composition (basic residues).

This sequence belongs to the rod/cone cGMP-PDE gamma subunit family. Tetramer composed of two catalytic chains (alpha and beta), and two inhibitory chains (gamma).

The enzyme catalyses 3',5'-cyclic GMP + H2O = GMP + H(+). In terms of biological role, participates in processes of transmission and amplification of the visual signal. cGMP-PDEs are the effector molecules in G-protein-mediated phototransduction in vertebrate rods and cones. In Bos taurus (Bovine), this protein is Retinal cone rhodopsin-sensitive cGMP 3',5'-cyclic phosphodiesterase subunit gamma (PDE6H).